Reading from the N-terminus, the 475-residue chain is Ribulose bisphosphate carboxylase large chain (475 aa).

A propeptide spanning residues Met1–Ser2 is cleaved from the precursor. Pro3 is subject to N-acetylproline. Lys14 bears the N6,N6,N6-trimethyllysine mark. Positions 123 and 173 each coordinate substrate. The active-site Proton acceptor is Lys175. Residue Lys177 participates in substrate binding. The Mg(2+) site is built by Lys201, Asp203, and Glu204. At Lys201 the chain carries N6-carboxylysine. His294 serves as the catalytic Proton acceptor. Arg295, His327, and Ser379 together coordinate substrate.

It belongs to the RuBisCO large chain family. Type I subfamily. In terms of assembly, heterohexadecamer of 8 large chains and 8 small chains; disulfide-linked. The disulfide link is formed within the large subunit homodimers. Mg(2+) is required as a cofactor. Post-translationally, the disulfide bond which can form in the large chain dimeric partners within the hexadecamer appears to be associated with oxidative stress and protein turnover.

Its subcellular location is the plastid. It is found in the chloroplast. It catalyses the reaction 2 (2R)-3-phosphoglycerate + 2 H(+) = D-ribulose 1,5-bisphosphate + CO2 + H2O. The enzyme catalyses D-ribulose 1,5-bisphosphate + O2 = 2-phosphoglycolate + (2R)-3-phosphoglycerate + 2 H(+). Its function is as follows. RuBisCO catalyzes two reactions: the carboxylation of D-ribulose 1,5-bisphosphate, the primary event in carbon dioxide fixation, as well as the oxidative fragmentation of the pentose substrate in the photorespiration process. Both reactions occur simultaneously and in competition at the same active site. This is Ribulose bisphosphate carboxylase large chain from Angiopteris evecta (Mule's foot fern).